Here is a 475-residue protein sequence, read N- to C-terminus: Terminase, large subunit (475 aa).

The segment at 1–58 is interaction with the terminase small subunit; sequence MELDAILDNLSDEEQIELLELLEEEENYRNTHLLYEFTPYSKQREFIDAGHDYQSDVL. An ATPase activity region spans residues 1-282; sequence MELDAILDNL…EHEREARARG (282 aa). The segment at 308–475 is nuclease activity; it reads DHFYVIDAQD…MRLRQDDARY (168 aa). Residues Asp-317 and Asp-455 each coordinate Mg(2+).

It belongs to the Lederbergvirus large terminase family. Interacts with the terminase small subunit; the active complex is composed of dimer of terminase large subunits and a nonamer ring of terminase small subunits. Interacts with the portal protein; this interaction allows the packaging of viral DNA. Requires Mg(2+) as cofactor.

Functionally, the terminase large subunit acts as an ATP driven molecular motor necessary for viral DNA translocation into empty capsids and as an endonuclease that cuts the viral genome to initiate and to end a packaging reaction. The terminase lies at a unique vertex of the procapsid and is composed of two subunits, a small terminase subunit involved in viral DNA recognition (packaging 'pac' sequence), and a large terminase subunit possessing endonucleolytic and ATPase activities. Both terminase subunits heterooligomerize and are docked on the portal protein to form the packaging machine. The terminase large subunit exhibits endonuclease activity and cleaves the viral genome concatemer once the capsid is full (headful packaging). Once the capsid is packaged with the DNA, the terminase complex is substituted by the tail. The chain is Terminase, large subunit (2) from Salmonella (Bacteriophage LP7).